We begin with the raw amino-acid sequence, 636 residues long: 1-deoxy-D-xylulose-5-phosphate synthase (636 aa).

Residues His84 and 125 to 127 (GHS) each bind thiamine diphosphate. Residue Asp156 coordinates Mg(2+). Thiamine diphosphate contacts are provided by residues 157-158 (GA), Asn185, Phe292, and Glu375. Asn185 contributes to the Mg(2+) binding site.

This sequence belongs to the transketolase family. DXPS subfamily. Homodimer. Mg(2+) serves as cofactor. The cofactor is thiamine diphosphate.

It catalyses the reaction D-glyceraldehyde 3-phosphate + pyruvate + H(+) = 1-deoxy-D-xylulose 5-phosphate + CO2. It participates in metabolic intermediate biosynthesis; 1-deoxy-D-xylulose 5-phosphate biosynthesis; 1-deoxy-D-xylulose 5-phosphate from D-glyceraldehyde 3-phosphate and pyruvate: step 1/1. Its function is as follows. Catalyzes the acyloin condensation reaction between C atoms 2 and 3 of pyruvate and glyceraldehyde 3-phosphate to yield 1-deoxy-D-xylulose-5-phosphate (DXP). The sequence is that of 1-deoxy-D-xylulose-5-phosphate synthase from Cellvibrio japonicus (strain Ueda107) (Pseudomonas fluorescens subsp. cellulosa).